Here is an 89-residue protein sequence, read N- to C-terminus: Small ribosomal subunit protein uS15 (89 aa).

It belongs to the universal ribosomal protein uS15 family. Part of the 30S ribosomal subunit. Forms a bridge to the 50S subunit in the 70S ribosome, contacting the 23S rRNA.

One of the primary rRNA binding proteins, it binds directly to 16S rRNA where it helps nucleate assembly of the platform of the 30S subunit by binding and bridging several RNA helices of the 16S rRNA. Functionally, forms an intersubunit bridge (bridge B4) with the 23S rRNA of the 50S subunit in the ribosome. The polypeptide is Small ribosomal subunit protein uS15 (Rippkaea orientalis (strain PCC 8801 / RF-1) (Cyanothece sp. (strain PCC 8801))).